We begin with the raw amino-acid sequence, 169 residues long: Ribosome maturation factor RimM (169 aa).

The region spanning 93–167 (PENSFFISDI…KISVILPKGL (75 aa)) is the PRC barrel domain.

Belongs to the RimM family. Binds ribosomal protein uS19.

Its subcellular location is the cytoplasm. An accessory protein needed during the final step in the assembly of 30S ribosomal subunit, possibly for assembly of the head region. Essential for efficient processing of 16S rRNA. May be needed both before and after RbfA during the maturation of 16S rRNA. It has affinity for free ribosomal 30S subunits but not for 70S ribosomes. This Ruminiclostridium cellulolyticum (strain ATCC 35319 / DSM 5812 / JCM 6584 / H10) (Clostridium cellulolyticum) protein is Ribosome maturation factor RimM.